The following is a 118-amino-acid chain: Ribonuclease P protein component (118 aa).

The protein belongs to the RnpA family. In terms of assembly, consists of a catalytic RNA component (M1 or rnpB) and a protein subunit.

The catalysed reaction is Endonucleolytic cleavage of RNA, removing 5'-extranucleotides from tRNA precursor.. In terms of biological role, RNaseP catalyzes the removal of the 5'-leader sequence from pre-tRNA to produce the mature 5'-terminus. It can also cleave other RNA substrates such as 4.5S RNA. The protein component plays an auxiliary but essential role in vivo by binding to the 5'-leader sequence and broadening the substrate specificity of the ribozyme. The sequence is that of Ribonuclease P protein component from Mycobacterium sp. (strain KMS).